The following is a 123-amino-acid chain: Large ribosomal subunit protein bL19 (123 aa).

The protein belongs to the bacterial ribosomal protein bL19 family.

Functionally, this protein is located at the 30S-50S ribosomal subunit interface and may play a role in the structure and function of the aminoacyl-tRNA binding site. This chain is Large ribosomal subunit protein bL19, found in Ureaplasma urealyticum serovar 10 (strain ATCC 33699 / Western).